Reading from the N-terminus, the 341-residue chain is L-threonine 3-dehydrogenase (341 aa).

Cys38 serves as a coordination point for Zn(2+). Residues Thr40 and His43 each act as charge relay system in the active site. Zn(2+) contacts are provided by His63, Glu64, Cys93, Cys96, Cys99, and Cys107. NAD(+) contacts are provided by residues Ile175, Asp195, Arg200, Leu262–Ile264, and Ile286–Tyr287.

This sequence belongs to the zinc-containing alcohol dehydrogenase family. As to quaternary structure, homotetramer. Requires Zn(2+) as cofactor.

It localises to the cytoplasm. The enzyme catalyses L-threonine + NAD(+) = (2S)-2-amino-3-oxobutanoate + NADH + H(+). The protein operates within amino-acid degradation; L-threonine degradation via oxydo-reductase pathway; glycine from L-threonine: step 1/2. Functionally, catalyzes the NAD(+)-dependent oxidation of L-threonine to 2-amino-3-ketobutyrate. The sequence is that of L-threonine 3-dehydrogenase from Solibacter usitatus (strain Ellin6076).